The primary structure comprises 127 residues: Large ribosomal subunit protein bL20 (127 aa).

It belongs to the bacterial ribosomal protein bL20 family.

Functionally, binds directly to 23S ribosomal RNA and is necessary for the in vitro assembly process of the 50S ribosomal subunit. It is not involved in the protein synthesizing functions of that subunit. The sequence is that of Large ribosomal subunit protein bL20 from Bifidobacterium longum (strain DJO10A).